Reading from the N-terminus, the 335-residue chain is Fructose-1,6-bisphosphatase class 1 (335 aa).

4 residues coordinate Mg(2+): glutamate 92, aspartate 114, leucine 116, and aspartate 117. Substrate is bound by residues 117–120 (DGSS), asparagine 210, tyrosine 242, and lysine 274. Position 280 (glutamate 280) interacts with Mg(2+).

It belongs to the FBPase class 1 family. As to quaternary structure, homotetramer. It depends on Mg(2+) as a cofactor.

It is found in the cytoplasm. It catalyses the reaction beta-D-fructose 1,6-bisphosphate + H2O = beta-D-fructose 6-phosphate + phosphate. It participates in carbohydrate biosynthesis; gluconeogenesis. The chain is Fructose-1,6-bisphosphatase class 1 from Lawsonia intracellularis (strain PHE/MN1-00).